Reading from the N-terminus, the 369-residue chain is Serine proteinase inhibitor 1 (369 aa).

The protein belongs to the serpin family. Poxviruses subfamily.

Its function is as follows. Important in virulence. The chain is Serine proteinase inhibitor 1 (SPI-1) from Oryctolagus cuniculus (Rabbit).